Consider the following 460-residue polypeptide: 7-cyano-7-deazaguanine synthase 2 (460 aa).

The active-site For GATase activity is Cys2. Positions 2–225 (CSVTGVLIIK…PYSIVEVNDN (224 aa)) constitute a Glutamine amidotransferase type-2 domain. 245–255 (ASGGLDSTVAA) contributes to the ATP binding site. 4 residues coordinate Zn(2+): Cys426, Cys434, Cys437, and Cys440.

The protein belongs to the QueC family. Zn(2+) is required as a cofactor.

The enzyme catalyses 7-carboxy-7-deazaguanine + NH4(+) + ATP = 7-cyano-7-deazaguanine + ADP + phosphate + H2O + H(+). It participates in purine metabolism; 7-cyano-7-deazaguanine biosynthesis. Functionally, catalyzes the ATP-dependent conversion of 7-carboxy-7-deazaguanine (CDG) to 7-cyano-7-deazaguanine (preQ(0)). The sequence is that of 7-cyano-7-deazaguanine synthase 2 (queC2) from Sulfurisphaera tokodaii (strain DSM 16993 / JCM 10545 / NBRC 100140 / 7) (Sulfolobus tokodaii).